The primary structure comprises 88 residues: Small ribosomal subunit protein uS15c (88 aa).

It belongs to the universal ribosomal protein uS15 family. In terms of assembly, part of the 30S ribosomal subunit.

The protein resides in the plastid. The protein localises to the chloroplast. The polypeptide is Small ribosomal subunit protein uS15c (rps15) (Calycanthus floridus var. glaucus (Eastern sweetshrub)).